A 536-amino-acid chain; its full sequence is Glyco-Gag protein (536 aa).

At 1–54 (MSGASSGTATGARLFGISSVLGEYRVLIGDEGAGPSRSPSEVSFSVWYRSRAAR) the chain is on the cytoplasmic side. A helical membrane pass occupies residues 55–75 (LVILCLVASFLVPCLTFLIAE). Over 76 to 536 (TVMGQTVTTP…TQNRNKDREE (461 aa)) the chain is Extracellular. Asn137 carries an N-linked (GlcNAc...) asparagine; by host glycan. Disordered stretches follow at residues 174-284 (VRPF…NNRP) and 494-536 (ETPE…DREE). The span at 177–198 (FLPPPKPPTPLPQPLSPQPSAP) shows a compositional bias: pro residues. Over residues 199–209 (PTSSLYPVLPK) the composition is skewed to low complexity. 2 stretches are compositionally biased toward pro residues: residues 210 to 223 (TNPP…PDPS) and 233 to 246 (EPPP…PPPS). Positions 494–511 (ETPEEREERLWQRQEERD) are enriched in basic and acidic residues.

In terms of processing, glycosylated by host. Cleaved by host near the middle of the molecule, releasing the c-terminal half containing capsid and nucleoprotein domains op GAG.

The protein resides in the host cell membrane. In terms of biological role, plays a role in viral particle release. Presumably acts by facilitating the fission of the virion bud at the cell surface. In Feline sarcoma virus (strain McDonough), this protein is Glyco-Gag protein.